The primary structure comprises 704 residues: UvrABC system protein B (704 aa).

The Helicase ATP-binding domain maps to 35 to 188; the sequence is ERINNGEKDV…DDLLRKFVSM (154 aa). Position 48–55 (48–55) interacts with ATP; the sequence is GATGTGKS. The short motif at 101 to 124 is the Beta-hairpin element; that stretch reads YYDYYQPEAYVAQTDTFIEKDSSI. The Helicase C-terminal domain occupies 438 to 604; sequence QIDDLLGEIR…PLRKKIADIT (167 aa). The UVR domain maps to 659–694; that stretch reads VGMIAQLTEQMHGAAAELQFEVAARIRDEVSELKKE.

Belongs to the UvrB family. As to quaternary structure, forms a heterotetramer with UvrA during the search for lesions. Interacts with UvrC in an incision complex.

The protein localises to the cytoplasm. In terms of biological role, the UvrABC repair system catalyzes the recognition and processing of DNA lesions. A damage recognition complex composed of 2 UvrA and 2 UvrB subunits scans DNA for abnormalities. Upon binding of the UvrA(2)B(2) complex to a putative damaged site, the DNA wraps around one UvrB monomer. DNA wrap is dependent on ATP binding by UvrB and probably causes local melting of the DNA helix, facilitating insertion of UvrB beta-hairpin between the DNA strands. Then UvrB probes one DNA strand for the presence of a lesion. If a lesion is found the UvrA subunits dissociate and the UvrB-DNA preincision complex is formed. This complex is subsequently bound by UvrC and the second UvrB is released. If no lesion is found, the DNA wraps around the other UvrB subunit that will check the other stand for damage. The sequence is that of UvrABC system protein B from Pseudarthrobacter chlorophenolicus (strain ATCC 700700 / DSM 12829 / CIP 107037 / JCM 12360 / KCTC 9906 / NCIMB 13794 / A6) (Arthrobacter chlorophenolicus).